Consider the following 225-residue polypeptide: PKHD-type hydroxylase YbiX (225 aa).

The Fe2OG dioxygenase domain occupies 78–177 (TLSTPLFNRY…RVASFMWIQS (100 aa)). Fe cation is bound by residues His96, Asp98, and His158. Arg168 lines the 2-oxoglutarate pocket.

Fe(2+) is required as a cofactor. L-ascorbate serves as cofactor.

This chain is PKHD-type hydroxylase YbiX, found in Shigella boydii serotype 4 (strain Sb227).